Reading from the N-terminus, the 644-residue chain is Anti-sigma-I factor RsgI3 (644 aa).

At 1–56 (MDNIGVIIKIEGNEAIVMTDDCSFKKVPIKDGMHPGQKILVPNNEVIQKENKSIKR) the chain is on the cytoplasmic side. The RsgI N-terminal anti-sigma domain occupies 3–50 (NIGVIIKIEGNEAIVMTDDCSFKKVPIKDGMHPGQKILVPNNEVIQKE). A helical transmembrane segment spans residues 57–77 (ISAVATGIAAVFLMVLSLIWI). Topologically, residues 78–644 (NKPGRPDGIY…VVPSKNLFAD (567 aa)) are extracellular. Residues 302–328 (PTNTPSISTKPSATPAENPTPKLTQKP) show a composition bias toward polar residues. Residues 302–359 (PTNTPSISTKPSATPAENPTPKLTQKPTPVPAKTGERTSTTPTPTPAPTVRNGTGSGL) form a disordered region. 2 PA14 domains span residues 354 to 491 (GTGS…PSSQ) and 502 to 640 (KDVN…PSKN).

In terms of assembly, interacts (via RsgI N-terminal anti-sigma domain) with SigI3.

Its subcellular location is the cell membrane. Its function is as follows. Anti-sigma factor for SigI3. Negatively regulates SigI3 activity through direct interaction. Binding of the polysaccharide substrate to the extracellular C-terminal sensing domain of RsgI3 may induce a conformational change in its N-terminal cytoplasmic region, leading to the release and activation of SigI3. This is Anti-sigma-I factor RsgI3 from Acetivibrio thermocellus (strain ATCC 27405 / DSM 1237 / JCM 9322 / NBRC 103400 / NCIMB 10682 / NRRL B-4536 / VPI 7372) (Clostridium thermocellum).